The primary structure comprises 216 residues: Uracil phosphoribosyltransferase (216 aa).

Lys-30–Arg-34 contacts GTP. Residues Arg-80, Arg-105, and Asp-140–Thr-148 contribute to the 5-phospho-alpha-D-ribose 1-diphosphate site. Uracil is bound by residues Ile-203 and Gly-208–Ala-210. Position 209 (Asp-209) interacts with 5-phospho-alpha-D-ribose 1-diphosphate.

It belongs to the UPRTase family. The cofactor is Mg(2+).

The catalysed reaction is UMP + diphosphate = 5-phospho-alpha-D-ribose 1-diphosphate + uracil. It participates in pyrimidine metabolism; UMP biosynthesis via salvage pathway; UMP from uracil: step 1/1. Allosterically activated by GTP. Its function is as follows. Catalyzes the conversion of uracil and 5-phospho-alpha-D-ribose 1-diphosphate (PRPP) to UMP and diphosphate. The sequence is that of Uracil phosphoribosyltransferase from Sulfurisphaera tokodaii (strain DSM 16993 / JCM 10545 / NBRC 100140 / 7) (Sulfolobus tokodaii).